The following is a 257-amino-acid chain: Flap endonuclease Xni (257 aa).

Asp-112 is a Mg(2+) binding site. The region spanning 169 to 256 (EQKKLVEFWA…LGFSLKQLRL (88 aa)) is the 5'-3' exonuclease domain. Residues Phe-179, Ala-180, Pro-188, Val-190, and Ile-193 each contribute to the K(+) site. An interaction with DNA region spans residues 192-197 (GIGTKS).

The protein belongs to the Xni family. Mg(2+) serves as cofactor. K(+) is required as a cofactor.

Has flap endonuclease activity. During DNA replication, flap endonucleases cleave the 5'-overhanging flap structure that is generated by displacement synthesis when DNA polymerase encounters the 5'-end of a downstream Okazaki fragment. In Pseudoalteromonas translucida (strain TAC 125), this protein is Flap endonuclease Xni.